We begin with the raw amino-acid sequence, 137 residues long: ATP synthase epsilon chain (137 aa).

This sequence belongs to the ATPase epsilon chain family. As to quaternary structure, F-type ATPases have 2 components, CF(1) - the catalytic core - and CF(0) - the membrane proton channel. CF(1) has five subunits: alpha(3), beta(3), gamma(1), delta(1), epsilon(1). CF(0) has three main subunits: a, b and c.

The protein localises to the cellular thylakoid membrane. Produces ATP from ADP in the presence of a proton gradient across the membrane. The sequence is that of ATP synthase epsilon chain (atpC) from Synechococcus elongatus (strain ATCC 33912 / PCC 7942 / FACHB-805) (Anacystis nidulans R2).